A 300-amino-acid chain; its full sequence is Telomere repeat-binding factor 1 (300 aa).

An HTH myb-type domain is found at 1–58; the sequence is MGAPKQKWTQEEESALKSGVIKHGPGKWRTILKDPEFSGVLYLRSNVDLKDKWRNMSV. Positions 28–57 form a DNA-binding region, H-T-H motif; that stretch reads WRTILKDPEFSGVLYLRSNVDLKDKWRNMS. Disordered regions lie at residues 93-119 and 185-213; these read LQSD…RPNV and NSTP…PSPK. The H15 domain occupies 117 to 185; it reads PNVRLDSLIM…KVKRKYRIPN (69 aa). Residues 241-290 are a coiled coil; sequence EAAAVAAQAVAEAEAAMAEAEEAAKEAEAAEAEAEAAQAFAEEASKTLKG.

This sequence belongs to the histone H1/H5 family. SMH subfamily. Forms a homodimer and heterodimers with TRB2 or TRB3. Interacts with POT1b, TRB2 and TRB3 through its H15 domain.

The protein resides in the nucleus. The protein localises to the nucleolus. It is found in the chromosome. Functionally, binds preferentially double-stranded telomeric repeats. This chain is Telomere repeat-binding factor 1 (TRB1), found in Arabidopsis thaliana (Mouse-ear cress).